Here is a 671-residue protein sequence, read N- to C-terminus: Acetyl-coenzyme A synthetase 1 (671 aa).

CoA contacts are provided by residues 210 to 213 (RGGK) and threonine 329. Residues 405–407 (GEP), 429–434 (DTYWQT), aspartate 520, and arginine 535 contribute to the ATP site. Serine 543 lines the CoA pocket. Residue arginine 546 participates in ATP binding. Arginine 605 is a binding site for CoA.

This sequence belongs to the ATP-dependent AMP-binding enzyme family.

The enzyme catalyses acetate + ATP + CoA = acetyl-CoA + AMP + diphosphate. The protein is Acetyl-coenzyme A synthetase 1 (ACS1) of Debaryomyces hansenii (strain ATCC 36239 / CBS 767 / BCRC 21394 / JCM 1990 / NBRC 0083 / IGC 2968) (Yeast).